The following is a 219-amino-acid chain: Thiamine-phosphate synthase (219 aa).

4-amino-2-methyl-5-(diphosphooxymethyl)pyrimidine-binding positions include 44 to 48 and N79; that span reads QFREK. Mg(2+) is bound by residues D80 and D99. S117 is a 4-amino-2-methyl-5-(diphosphooxymethyl)pyrimidine binding site. 143 to 145 is a binding site for 2-[(2R,5Z)-2-carboxy-4-methylthiazol-5(2H)-ylidene]ethyl phosphate; it reads TST. K146 is a binding site for 4-amino-2-methyl-5-(diphosphooxymethyl)pyrimidine. 2-[(2R,5Z)-2-carboxy-4-methylthiazol-5(2H)-ylidene]ethyl phosphate is bound by residues G175 and 195–196; that span reads IS.

The protein belongs to the thiamine-phosphate synthase family. It depends on Mg(2+) as a cofactor.

It carries out the reaction 2-[(2R,5Z)-2-carboxy-4-methylthiazol-5(2H)-ylidene]ethyl phosphate + 4-amino-2-methyl-5-(diphosphooxymethyl)pyrimidine + 2 H(+) = thiamine phosphate + CO2 + diphosphate. It catalyses the reaction 2-(2-carboxy-4-methylthiazol-5-yl)ethyl phosphate + 4-amino-2-methyl-5-(diphosphooxymethyl)pyrimidine + 2 H(+) = thiamine phosphate + CO2 + diphosphate. The catalysed reaction is 4-methyl-5-(2-phosphooxyethyl)-thiazole + 4-amino-2-methyl-5-(diphosphooxymethyl)pyrimidine + H(+) = thiamine phosphate + diphosphate. It functions in the pathway cofactor biosynthesis; thiamine diphosphate biosynthesis; thiamine phosphate from 4-amino-2-methyl-5-diphosphomethylpyrimidine and 4-methyl-5-(2-phosphoethyl)-thiazole: step 1/1. In terms of biological role, condenses 4-methyl-5-(beta-hydroxyethyl)thiazole monophosphate (THZ-P) and 2-methyl-4-amino-5-hydroxymethyl pyrimidine pyrophosphate (HMP-PP) to form thiamine monophosphate (TMP). The polypeptide is Thiamine-phosphate synthase (Bacillus anthracis (strain A0248)).